A 798-amino-acid polypeptide reads, in one-letter code: Cation channel sperm-associated auxiliary subunit delta (798 aa).

Positions 1 to 20 (MLMLMLVAAVTMWLRPLVTA) are cleaved as a signal peptide. The Extracellular portion of the chain corresponds to 21 to 723 (QLCRSRTVRT…AFPVQLVSAG (703 aa)). 7 disulfide bridges follow: Cys23–Cys369, Cys59–Cys145, Cys144–Cys152, Cys387–Cys496, Cys510–Cys701, Cys525–Cys572, and Cys624–Cys652. The N-linked (GlcNAc...) asparagine glycan is linked to Asn123. 5 N-linked (GlcNAc...) asparagine glycosylation sites follow: Asn230, Asn240, Asn472, Asn538, and Asn630. The chain crosses the membrane as a helical span at residues 724-745 (VVILLIISSILGSVWLAYKTPK). Residues 746 to 798 (LLRTARGRRIKKCATQLCRRCKTVCQFRASATARAGTEPPGRHRTPHGGRSDH) are Cytoplasmic-facing.

It belongs to the CATSPERD family. Component of the CatSper complex or CatSpermasome composed of the core pore-forming members CATSPER1, CATSPER2, CATSPER3 and CATSPER4 as well as auxiliary members CATSPERB, CATSPERG, CATSPERD, CATSPERE, CATSPERZ, C2CD6/CATSPERT, TMEM249, TMEM262 and EFCAB9. HSPA1 may be an additional auxiliary complex member. The core complex members CATSPER1, CATSPER2, CATSPER3 and CATSPER4 form a heterotetrameric channel. The auxiliary CATSPERB, CATSPERG, CATSPERD and CATSPERE subunits form a pavilion-like structure over the pore which stabilizes the complex through interactions with CATSPER4, CATSPER3, CATSPER1 and CATSPER2 respectively. TMEM262/CATSPERH interacts with CATSPERB, further stabilizing the complex. C2CD6/CATSPERT interacts at least with CATSPERD and is required for targeting the CatSper complex in the flagellar membrane.

Its subcellular location is the cell projection. The protein resides in the cilium. It is found in the flagellum membrane. Its function is as follows. Auxiliary component of the CatSper complex, a complex involved in sperm cell hyperactivation. Sperm cell hyperactivation is needed for sperm motility which is essential late in the preparation of sperm for fertilization. Required for CATSPER1 stability before intraflagellar transport and/or incorporation of the CatSper complex channel into the flagellar membrane. The chain is Cation channel sperm-associated auxiliary subunit delta from Homo sapiens (Human).